A 192-amino-acid polypeptide reads, in one-letter code: Peptidyl-tRNA hydrolase (192 aa).

Position 17 (Tyr17) interacts with tRNA. His22 serves as the catalytic Proton acceptor. Positions 68, 70, and 116 each coordinate tRNA.

This sequence belongs to the PTH family. As to quaternary structure, monomer.

It is found in the cytoplasm. The catalysed reaction is an N-acyl-L-alpha-aminoacyl-tRNA + H2O = an N-acyl-L-amino acid + a tRNA + H(+). Hydrolyzes ribosome-free peptidyl-tRNAs (with 1 or more amino acids incorporated), which drop off the ribosome during protein synthesis, or as a result of ribosome stalling. Its function is as follows. Catalyzes the release of premature peptidyl moieties from peptidyl-tRNA molecules trapped in stalled 50S ribosomal subunits, and thus maintains levels of free tRNAs and 50S ribosomes. The chain is Peptidyl-tRNA hydrolase from Mycolicibacterium vanbaalenii (strain DSM 7251 / JCM 13017 / BCRC 16820 / KCTC 9966 / NRRL B-24157 / PYR-1) (Mycobacterium vanbaalenii).